A 283-amino-acid chain; its full sequence is 4-hydroxy-3-methylbut-2-enyl diphosphate reductase (283 aa).

Cysteine 12 provides a ligand contact to [4Fe-4S] cluster. Histidine 40 and histidine 72 together coordinate (2E)-4-hydroxy-3-methylbut-2-enyl diphosphate. Positions 40 and 72 each coordinate dimethylallyl diphosphate. Residues histidine 40 and histidine 72 each coordinate isopentenyl diphosphate. Cysteine 94 provides a ligand contact to [4Fe-4S] cluster. Histidine 122 provides a ligand contact to (2E)-4-hydroxy-3-methylbut-2-enyl diphosphate. Histidine 122 lines the dimethylallyl diphosphate pocket. Histidine 122 is a binding site for isopentenyl diphosphate. Catalysis depends on glutamate 124, which acts as the Proton donor. Threonine 160 is a (2E)-4-hydroxy-3-methylbut-2-enyl diphosphate binding site. Cysteine 188 lines the [4Fe-4S] cluster pocket. 3 residues coordinate (2E)-4-hydroxy-3-methylbut-2-enyl diphosphate: serine 216, asparagine 218, and serine 259. 3 residues coordinate dimethylallyl diphosphate: serine 216, asparagine 218, and serine 259. Isopentenyl diphosphate contacts are provided by serine 216, asparagine 218, and serine 259.

It belongs to the IspH family. Requires [4Fe-4S] cluster as cofactor.

It carries out the reaction isopentenyl diphosphate + 2 oxidized [2Fe-2S]-[ferredoxin] + H2O = (2E)-4-hydroxy-3-methylbut-2-enyl diphosphate + 2 reduced [2Fe-2S]-[ferredoxin] + 2 H(+). The catalysed reaction is dimethylallyl diphosphate + 2 oxidized [2Fe-2S]-[ferredoxin] + H2O = (2E)-4-hydroxy-3-methylbut-2-enyl diphosphate + 2 reduced [2Fe-2S]-[ferredoxin] + 2 H(+). It participates in isoprenoid biosynthesis; dimethylallyl diphosphate biosynthesis; dimethylallyl diphosphate from (2E)-4-hydroxy-3-methylbutenyl diphosphate: step 1/1. The protein operates within isoprenoid biosynthesis; isopentenyl diphosphate biosynthesis via DXP pathway; isopentenyl diphosphate from 1-deoxy-D-xylulose 5-phosphate: step 6/6. Catalyzes the conversion of 1-hydroxy-2-methyl-2-(E)-butenyl 4-diphosphate (HMBPP) into a mixture of isopentenyl diphosphate (IPP) and dimethylallyl diphosphate (DMAPP). Acts in the terminal step of the DOXP/MEP pathway for isoprenoid precursor biosynthesis. This is 4-hydroxy-3-methylbut-2-enyl diphosphate reductase from Dictyoglomus thermophilum (strain ATCC 35947 / DSM 3960 / H-6-12).